The chain runs to 680 residues: DNA-directed RNA polymerase subunit beta' (680 aa).

Zn(2+) is bound by residues Cys69, Cys71, Cys87, and Cys90. Residues Asp489, Asp491, and Asp493 each coordinate Mg(2+).

The protein belongs to the RNA polymerase beta' chain family. RpoC1 subfamily. As to quaternary structure, in plastids the minimal PEP RNA polymerase catalytic core is composed of four subunits: alpha, beta, beta', and beta''. When a (nuclear-encoded) sigma factor is associated with the core the holoenzyme is formed, which can initiate transcription. Mg(2+) serves as cofactor. Requires Zn(2+) as cofactor.

The protein resides in the plastid. Its subcellular location is the chloroplast. It carries out the reaction RNA(n) + a ribonucleoside 5'-triphosphate = RNA(n+1) + diphosphate. DNA-dependent RNA polymerase catalyzes the transcription of DNA into RNA using the four ribonucleoside triphosphates as substrates. This Lepidium virginicum (Virginia pepperweed) protein is DNA-directed RNA polymerase subunit beta'.